The following is a 319-amino-acid chain: Beta-ketoacyl-[acyl-carrier-protein] synthase III (319 aa).

Residues Cys-115 and His-246 contribute to the active site. The ACP-binding stretch occupies residues 247 to 251 (QANLR). The active site involves Asn-276.

It belongs to the thiolase-like superfamily. FabH family. In terms of assembly, homodimer.

Its subcellular location is the cytoplasm. The catalysed reaction is malonyl-[ACP] + acetyl-CoA + H(+) = 3-oxobutanoyl-[ACP] + CO2 + CoA. It participates in lipid metabolism; fatty acid biosynthesis. Its function is as follows. Catalyzes the condensation reaction of fatty acid synthesis by the addition to an acyl acceptor of two carbons from malonyl-ACP. Catalyzes the first condensation reaction which initiates fatty acid synthesis and may therefore play a role in governing the total rate of fatty acid production. Possesses both acetoacetyl-ACP synthase and acetyl transacylase activities. Its substrate specificity determines the biosynthesis of branched-chain and/or straight-chain of fatty acids. This chain is Beta-ketoacyl-[acyl-carrier-protein] synthase III, found in Coxiella burnetii (strain Dugway 5J108-111).